We begin with the raw amino-acid sequence, 222 residues long: MKSILLLFSLIVLGSATEEVSRTEQTSTLFSVEGEIALPSTRNCAKWSAGARIHLNHGQYMGFVRQDCTFRVDFVPTGTYIVQIENTDFVFEPIRVDITSKGKMRARKLTILQPNNVNTLPYPLRLSARGPARYFRKREEWRITDMLFSPMVLMLVVPLVVMLILPKMTANDPELKKEMENMQMPKVDMPDVGEMMANFFGGSAPAKKKAVTGGSGSGQRRK.

The signal sequence occupies residues 1-16; sequence MKSILLLFSLIVLGSA. Topologically, residues 17-145 are extracellular; it reads TEEVSRTEQT…RKREEWRITD (129 aa). The chain crosses the membrane as a helical span at residues 146-166; it reads MLFSPMVLMLVVPLVVMLILP. Residues 167-222 are Cytoplasmic-facing; the sequence is KMTANDPELKKEMENMQMPKVDMPDVGEMMANFFGGSAPAKKKAVTGGSGSGQRRK.

Belongs to the EMC7 family.

Its subcellular location is the membrane. This chain is ER membrane protein complex subunit 7 homolog, found in Caenorhabditis elegans.